The following is a 308-amino-acid chain: Transaldolase (308 aa).

The active-site Schiff-base intermediate with substrate is K125.

This sequence belongs to the transaldolase family. Type 1 subfamily. As to quaternary structure, homodimer.

It localises to the cytoplasm. It carries out the reaction D-sedoheptulose 7-phosphate + D-glyceraldehyde 3-phosphate = D-erythrose 4-phosphate + beta-D-fructose 6-phosphate. The protein operates within carbohydrate degradation; pentose phosphate pathway; D-glyceraldehyde 3-phosphate and beta-D-fructose 6-phosphate from D-ribose 5-phosphate and D-xylulose 5-phosphate (non-oxidative stage): step 2/3. Transaldolase is important for the balance of metabolites in the pentose-phosphate pathway. In Stutzerimonas stutzeri (strain A1501) (Pseudomonas stutzeri), this protein is Transaldolase.